The sequence spans 908 residues: Protein translocase subunit SecA (908 aa).

Residues Gln87, 105–109, and Asp512 each bind ATP; that span reads GEGKT. Residues 865–908 form a disordered region; it reads GGDDGSDEMMAHTPMIRDGDKVGRNDPCPCGSGRKYKQCHGKLS. The segment covering 879 to 888 has biased composition (basic and acidic residues); the sequence is MIRDGDKVGR. Residues Cys892, Cys894, Cys903, and His904 each contribute to the Zn(2+) site. A compositionally biased stretch (basic residues) spans 898-908; sequence RKYKQCHGKLS.

Belongs to the SecA family. As to quaternary structure, monomer and homodimer. Part of the essential Sec protein translocation apparatus which comprises SecA, SecYEG and auxiliary proteins SecDF-YajC and YidC. Zn(2+) is required as a cofactor.

The protein resides in the cell inner membrane. Its subcellular location is the cytoplasm. The catalysed reaction is ATP + H2O + cellular proteinSide 1 = ADP + phosphate + cellular proteinSide 2.. Part of the Sec protein translocase complex. Interacts with the SecYEG preprotein conducting channel. Has a central role in coupling the hydrolysis of ATP to the transfer of proteins into and across the cell membrane, serving both as a receptor for the preprotein-SecB complex and as an ATP-driven molecular motor driving the stepwise translocation of polypeptide chains across the membrane. The protein is Protein translocase subunit SecA of Shewanella sp. (strain MR-7).